The following is a 209-amino-acid chain: Chaperone protein TorD (209 aa).

It belongs to the TorD/DmsD family. TorD subfamily.

It is found in the cytoplasm. In terms of biological role, involved in the biogenesis of TorA. Acts on TorA before the insertion of the molybdenum cofactor and, as a result, probably favors a conformation of the apoenzyme that is competent for acquiring the cofactor. The polypeptide is Chaperone protein TorD (Shewanella baltica (strain OS185)).